A 182-amino-acid chain; its full sequence is Autophagy-related protein 31 (182 aa).

The disordered stretch occupies residues 105–134 (LTSGNDTGGDAGKKSGDISDPAAGPDVPRE).

The protein resides in the cytoplasm. The protein localises to the cytoskeleton. It is found in the preautophagosomal structure. Functionally, plays a role in starvation-induced autophagy. Involved in mitophagy. Functions with ATG17 and ATG29 at the preautophagosomal structure (PAS) in order to form normal autophagosomes under starvation conditions. May be involved in microtubule function, such as chromosome segregation and karyogamy. This Candida glabrata (strain ATCC 2001 / BCRC 20586 / JCM 3761 / NBRC 0622 / NRRL Y-65 / CBS 138) (Yeast) protein is Autophagy-related protein 31 (CIS1).